Reading from the N-terminus, the 353-residue chain is Photosystem II protein D1 (353 aa).

T2 bears the N-acetylthreonine mark. The residue at position 2 (T2) is a Phosphothreonine. A run of 3 helical transmembrane segments spans residues 29 to 46 (YIGWFGVLMIPTLLTATS), 118 to 133 (HFLLGVACYMGREWEL), and 142 to 156 (WIAVAYSAPVAAATA). Residue H118 coordinates chlorophyll a. Y126 is a binding site for pheophytin a. [CaMn4O5] cluster is bound by residues D170 and E189. A helical membrane pass occupies residues 197 to 218 (FHMLGVAGVFGGSLFSAMHGSL). H198 contributes to the chlorophyll a binding site. A quinone contacts are provided by residues H215 and 264-265 (SF). A Fe cation-binding site is contributed by H215. H272 serves as a coordination point for Fe cation. Residues 274–288 (FLAAWPVVGIWFTAL) traverse the membrane as a helical segment. The [CaMn4O5] cluster site is built by H332, E333, D342, and A344. Residues 345-353 (AVEAPSING) constitute a propeptide that is removed on maturation.

This sequence belongs to the reaction center PufL/M/PsbA/D family. PSII is composed of 1 copy each of membrane proteins PsbA, PsbB, PsbC, PsbD, PsbE, PsbF, PsbH, PsbI, PsbJ, PsbK, PsbL, PsbM, PsbT, PsbX, PsbY, PsbZ, Psb30/Ycf12, at least 3 peripheral proteins of the oxygen-evolving complex and a large number of cofactors. It forms dimeric complexes. The D1/D2 heterodimer binds P680, chlorophylls that are the primary electron donor of PSII, and subsequent electron acceptors. It shares a non-heme iron and each subunit binds pheophytin, quinone, additional chlorophylls, carotenoids and lipids. D1 provides most of the ligands for the Mn4-Ca-O5 cluster of the oxygen-evolving complex (OEC). There is also a Cl(-1) ion associated with D1 and D2, which is required for oxygen evolution. The PSII complex binds additional chlorophylls, carotenoids and specific lipids. is required as a cofactor. In terms of processing, tyr-161 forms a radical intermediate that is referred to as redox-active TyrZ, YZ or Y-Z. Post-translationally, C-terminally processed by CTPA; processing is essential to allow assembly of the oxygen-evolving complex and thus photosynthetic growth.

The protein resides in the plastid. It localises to the chloroplast thylakoid membrane. It catalyses the reaction 2 a plastoquinone + 4 hnu + 2 H2O = 2 a plastoquinol + O2. In terms of biological role, photosystem II (PSII) is a light-driven water:plastoquinone oxidoreductase that uses light energy to abstract electrons from H(2)O, generating O(2) and a proton gradient subsequently used for ATP formation. It consists of a core antenna complex that captures photons, and an electron transfer chain that converts photonic excitation into a charge separation. The D1/D2 (PsbA/PsbD) reaction center heterodimer binds P680, the primary electron donor of PSII as well as several subsequent electron acceptors. This Illicium oligandrum (Star anise) protein is Photosystem II protein D1.